The following is a 709-amino-acid chain: ATP-binding cassette sub-family F member 3 (709 aa).

A2 is modified (N-acetylalanine). A compositionally biased stretch (basic and acidic residues) spans 129-143 (RLKAKQEKRSEKETL). Positions 129–171 (RLKAKQEKRSEKETLKTSSPLVLEEASASQAGSRKESRLESSG) are disordered. Phosphoserine is present on residues S155, S157, and S161. The span at 161 to 171 (SRKESRLESSG) shows a compositional bias: basic and acidic residues. 2 consecutive ABC transporter domains span residues 178–424 (VRIE…LNQQ) and 492–707 (LQLD…RREG). Residue 210–217 (GRNGLGKT) coordinates ATP. Position 283 is a phosphoserine (S283). 525–532 (GENGAGKS) is a binding site for ATP.

This sequence belongs to the ABC transporter superfamily. ABCF family. EF3 subfamily.

In terms of biological role, displays an antiviral effect against flaviviruses such as west Nile virus (WNV) in the presence of OAS1B. The protein is ATP-binding cassette sub-family F member 3 (Abcf3) of Rattus norvegicus (Rat).